The following is a 75-amino-acid chain: Transaldolase (75 aa).

It belongs to the transaldolase family. Type 1 subfamily. As to quaternary structure, homodimer. In terms of processing, phosphorylated. Predominantly expressed in Y-organs.

The protein resides in the cytoplasm. It catalyses the reaction D-sedoheptulose 7-phosphate + D-glyceraldehyde 3-phosphate = D-erythrose 4-phosphate + beta-D-fructose 6-phosphate. It functions in the pathway carbohydrate degradation; pentose phosphate pathway; D-glyceraldehyde 3-phosphate and beta-D-fructose 6-phosphate from D-ribose 5-phosphate and D-xylulose 5-phosphate (non-oxidative stage): step 2/3. Transaldolase is important for the balance of metabolites in the pentose-phosphate pathway. May play a role in the conversion of sterols into ecdysteroids via NADPH. In Carcinus maenas (Common shore crab), this protein is Transaldolase.